The primary structure comprises 119 residues: Large ribosomal subunit protein bL20 (119 aa).

It belongs to the bacterial ribosomal protein bL20 family. Part of the 50S ribosomal subunit.

In terms of biological role, binds directly to 23S ribosomal RNA and is necessary for the in vitro assembly process of the 50S ribosomal subunit. It is not involved in the protein synthesizing functions of that subunit. In Bacillus subtilis (strain 168), this protein is Large ribosomal subunit protein bL20 (rplT).